The sequence spans 224 residues: Heme response regulator HssR (224 aa).

The region spanning asparagine 3–leucine 116 is the Response regulatory domain. Position 52 is a 4-aspartylphosphate (aspartate 52). Residues aspartate 124–glutamine 222 constitute a DNA-binding region (ompR/PhoB-type).

In terms of processing, phosphorylated by HssS.

Its subcellular location is the cytoplasm. In terms of biological role, member of the two-component regulatory system HssS/HssR involved in intracellular heme homeostasis and tempering of staphylococcal virulence. Phosphorylated HssR binds to a direct repeat sequence within hrtAB promoter and activates the expression of hrtAB, an efflux pump, in response to extracellular heme, hemin, hemoglobin or blood. This Staphylococcus epidermidis (strain ATCC 35984 / DSM 28319 / BCRC 17069 / CCUG 31568 / BM 3577 / RP62A) protein is Heme response regulator HssR (hssR).